The following is a 546-amino-acid chain: Alkaline phosphatase PafA (546 aa).

The first 25 residues, 1–25 (MLTPKKWLLGVLVVSGMLGAQKTNA), serve as a signal peptide directing secretion. Zn(2+) is bound by residues Asp-38 and Thr-79. Thr-79 serves as the catalytic Phosphothreonine intermediate. Substrate contacts are provided by residues Asn-100 and 162–164 (KDR). Residues Asp-305, His-309, Asp-352, His-353, and His-486 each coordinate Zn(2+).

Requires Zn(2+) as cofactor.

It localises to the periplasm. The catalysed reaction is a phosphate monoester + H2O = an alcohol + phosphate. With respect to regulation, strongly inhibited by orthovanadate and EDTA. Also inhibited by inorganic phosphate. Functionally, alkaline phosphatase with broad substrate specificity. Has phosphatase activity towards nucleotide phosphates with a preference for ATP. Active towards a great variety of phosphomonoesters with the exception of 2',3'-cyclic AMP and myo-inositol hexakisphosphate. The chain is Alkaline phosphatase PafA from Elizabethkingia meningoseptica (Chryseobacterium meningosepticum).